The sequence spans 1883 residues: AF4/FMR2 family member lilli (1883 aa).

Low complexity predominate over residues 1–45 (MAQQQQQQHLQQQQQQHHQQQQLQQLQQQQQLPQYNNNLYNLNYN). 17 disordered regions span residues 1 to 88 (MAQQ…SEGD), 140 to 311 (INST…EKDI), 329 to 381 (SIAA…SCTT), 449 to 540 (MPTP…HHQH), 609 to 654 (LGGG…HLSR), 796 to 827 (SISSGSASGSSSSDSAAGEVVPLPGPGETLQI), 844 to 901 (MQQK…KKHA), 922 to 962 (TAAA…LAKG), 992 to 1018 (VAGSRKREHSSNSSSNGNTPTKKLHAA), 1039 to 1075 (TAAAGSSSDEDSTSSSCSSTKSSNSSSSGSDSEATAT), 1115 to 1145 (KNNRLYGAGSSSNSSSSETEEQQQQQQQHKQ), 1170 to 1238 (QHQQ…KSDK), 1358 to 1413 (YAAE…GART), 1450 to 1510 (EHGV…DQVS), 1543 to 1583 (ANGS…KATT), 1595 to 1641 (QTST…PPSD), and 1783 to 1803 (PSNSVGSQGSGSNTPPGRIVP). The span at 57–80 (REKYERQQGIQSDDRETSLFEAPR) shows a compositional bias: basic and acidic residues. 4 stretches are compositionally biased toward low complexity: residues 140–154 (INSTTTTSSSASLLP), 161–178 (QQQQQQQQQQQQHYQQQQ), 223–253 (SASSSSSASNNNSSSATNNATAAAATSASTA), and 362–381 (PLNSPPAASGASSSSLSCTT). The segment covering 450–462 (PTPPKASPTPPTA) has biased composition (pro residues). Phosphothreonine is present on Thr458. A compositionally biased stretch (basic and acidic residues) spans 466–479 (LKSEKNHSLEKQDS). Over residues 481-491 (LENDLELSESD) the composition is skewed to acidic residues. A phosphoserine mark is found at Ser488 and Ser490. Residues 500–540 (SAGNSSNSSETDSSESGSEASSKGEAQQQQQQQQQLLHHQH) are compositionally biased toward low complexity. Positions 609–625 (LGGGGGSGSTGGGGGSS) are enriched in gly residues. Composition is skewed to low complexity over residues 626 to 639 (SSGMGNMSSSSSSN) and 796 to 813 (SISSGSASGSSSSDSAAG). Basic residues predominate over residues 867-877 (PRQKKPRKKKM). Ser887 and Ser888 each carry phosphoserine. The segment at residues 930 to 942 (KKGRGRPRKQQQQ) is a DNA-binding region (a.T hook). Residues 939-962 (QQQQLQQTQSGNLSSASAGSLAKG) are compositionally biased toward low complexity. Residues Ser953 and Ser955 each carry the phosphoserine modification. Composition is skewed to low complexity over residues 1124–1145 (SSSNSSSSETEEQQQQQQQHKQ), 1170–1186 (QHQQQQPLQPQQQQQQQ), 1200–1222 (SSSSDGSSSSSTDSSSTNSSSSS), 1362–1376 (QQQQQQQHLHTQQLH), and 1385–1399 (HYQQQHQPHQQKAQQ). A compositionally biased stretch (basic and acidic residues) spans 1450–1467 (EHGVKPEPELDAGYEAKY). Ser1546 is subject to Phosphoserine. Thr1548 bears the Phosphothreonine mark. Low complexity-rich tracts occupy residues 1558-1583 (QQQQHQQQQQQQQHQPQHQQQLKATT) and 1595-1606 (QTSTTATQQPTT). Residues 1614–1625 (TPPPVAPPPPPR) show a composition bias toward pro residues. Positions 1783–1794 (PSNSVGSQGSGS) are enriched in low complexity.

It belongs to the AF4 family.

It is found in the nucleus. Has a role in transcriptional regulation. Acts in parallel with the Ras/MAPK and the PI3K/PKB pathways in the control of cell identity and cellular growth. Essential for regulation of the cytoskeleton and cell growth but not for cell proliferation or growth rate. Required specifically for the microtubule-based basal transport of lipid droplets. Plays a partially redundant function downstream of Raf in cell fate specification in the developing eye. Pair-rule protein that regulates embryonic cellularization, gastrulation and segmentation. This is AF4/FMR2 family member lilli from Drosophila grimshawi (Hawaiian fruit fly).